Reading from the N-terminus, the 57-residue chain is Preprotein translocase subunit SecG (57 aa).

The Cytoplasmic segment spans residues 1–33 (MPSSKKKKENVPVMSMAGLIRYYEEEHEKYKVD). Residues 34–55 (PIYVIIASIVLVAVVVAVTKII) traverse the membrane as a helical segment. At 56–57 (PP) the chain is on the extracellular side.

It belongs to the SEC61-beta family. As to quaternary structure, component of the protein translocase complex. Heterotrimer consisting of alpha (SecY), beta (SecG) and gamma (SecE) subunits. Can form oligomers of the heterotrimer.

The protein resides in the cell membrane. Involved in protein export. The function of the beta subunit is unknown, but it may be involved in stabilization of the trimeric complex. This is Preprotein translocase subunit SecG from Metallosphaera sedula (strain ATCC 51363 / DSM 5348 / JCM 9185 / NBRC 15509 / TH2).